A 92-amino-acid chain; its full sequence is DNA-binding protein HU (92 aa).

Positions 58–92 (AGTARNPRTGETVNRPASKTARFQVGEGLKSSLNS) are disordered.

Belongs to the bacterial histone-like protein family. As to quaternary structure, homodimer.

In terms of biological role, histone-like DNA-binding protein which is capable of wrapping DNA to stabilize it, and thus to prevent its denaturation under extreme environmental conditions. The polypeptide is DNA-binding protein HU (hup) (Caulobacter vibrioides (strain ATCC 19089 / CIP 103742 / CB 15) (Caulobacter crescentus)).